A 209-amino-acid polypeptide reads, in one-letter code: MAQQDVKPTRSELINLKKKIKLSESGHKLLKMKRDGLILEFFKILNEARNVRTELDAAYEKSTEKINLASAVNGMVAVKSTAFTAKEYPEIQLSGHNIMGVVVPKISSTGVRKPLYERGYGIIGTNSYIDETADAYEELVEKIIAAAELETTMKRLLDEIEKTKRRVNALEFKVIPELIATMKYIRFMLEEMERENTFRLKRVKARMKN.

This sequence belongs to the V-ATPase D subunit family. As to quaternary structure, has multiple subunits with at least A(3), B(3), C, D, E, F, H, I and proteolipid K(x).

It localises to the cell membrane. In terms of biological role, component of the A-type ATP synthase that produces ATP from ADP in the presence of a proton gradient across the membrane. The sequence is that of A-type ATP synthase subunit D from Methanosarcina acetivorans (strain ATCC 35395 / DSM 2834 / JCM 12185 / C2A).